The primary structure comprises 256 residues: MQEINGTSHLKMGIAITTYSNEKTSATRIQIIRDSLTSLKMFRNNVEVIIVVDGSYNTDHKKLLDEFNGDFEIIYREKNGGISKAKNTCIKLLLAKNIDIGFLADDDVLYCENWHNAYATSILNTKIDHFVYLPPQIYQSVLRKTTYNNIPVIECTSGGIAGCFMTFTPKIIQQIGYFRIYPYVYGCEHRDFSYRCLKNRLVPNIFDIDNSSNYLKLHHLSLDSSSIIVDKGGLALNIEKKKEYLNKFQEYVECIE.

It belongs to the glycosyltransferase 2 family.

This is an uncharacterized protein from Acanthamoeba polyphaga mimivirus (APMV).